A 209-amino-acid polypeptide reads, in one-letter code: Large ribosomal subunit protein uL3 (209 aa).

The protein belongs to the universal ribosomal protein uL3 family. Part of the 50S ribosomal subunit. Forms a cluster with proteins L14 and L19.

Its function is as follows. One of the primary rRNA binding proteins, it binds directly near the 3'-end of the 23S rRNA, where it nucleates assembly of the 50S subunit. In Desulfotalea psychrophila (strain LSv54 / DSM 12343), this protein is Large ribosomal subunit protein uL3.